We begin with the raw amino-acid sequence, 153 residues long: 6,7-dimethyl-8-ribityllumazine synthase (153 aa).

5-amino-6-(D-ribitylamino)uracil-binding positions include Phe-22, 56-58 (AFE), and 80-82 (TVI). 85-86 (ST) is a binding site for (2S)-2-hydroxy-3-oxobutyl phosphate. His-88 serves as the catalytic Proton donor. Phe-113 is a 5-amino-6-(D-ribitylamino)uracil binding site. Arg-127 is a binding site for (2S)-2-hydroxy-3-oxobutyl phosphate.

The protein belongs to the DMRL synthase family. As to quaternary structure, forms an icosahedral capsid composed of 60 subunits, arranged as a dodecamer of pentamers.

The catalysed reaction is (2S)-2-hydroxy-3-oxobutyl phosphate + 5-amino-6-(D-ribitylamino)uracil = 6,7-dimethyl-8-(1-D-ribityl)lumazine + phosphate + 2 H2O + H(+). Its pathway is cofactor biosynthesis; riboflavin biosynthesis; riboflavin from 2-hydroxy-3-oxobutyl phosphate and 5-amino-6-(D-ribitylamino)uracil: step 1/2. Catalyzes the formation of 6,7-dimethyl-8-ribityllumazine by condensation of 5-amino-6-(D-ribitylamino)uracil with 3,4-dihydroxy-2-butanone 4-phosphate. This is the penultimate step in the biosynthesis of riboflavin. This Haemophilus ducreyi (strain 35000HP / ATCC 700724) protein is 6,7-dimethyl-8-ribityllumazine synthase.